The sequence spans 202 residues: Holliday junction resolvase RecU (202 aa).

The Mg(2+) site is built by Thr-85, Asp-87, Glu-100, and Gln-119.

This sequence belongs to the RecU family. It depends on Mg(2+) as a cofactor.

Its subcellular location is the cytoplasm. It carries out the reaction Endonucleolytic cleavage at a junction such as a reciprocal single-stranded crossover between two homologous DNA duplexes (Holliday junction).. Its function is as follows. Endonuclease that resolves Holliday junction intermediates in genetic recombination. Cleaves mobile four-strand junctions by introducing symmetrical nicks in paired strands. Promotes annealing of linear ssDNA with homologous dsDNA. Required for DNA repair, homologous recombination and chromosome segregation. This Streptococcus equi subsp. equi (strain 4047) protein is Holliday junction resolvase RecU.